We begin with the raw amino-acid sequence, 468 residues long: ATP synthase subunit beta (468 aa).

Gly-155–Thr-162 contacts ATP.

It belongs to the ATPase alpha/beta chains family. As to quaternary structure, F-type ATPases have 2 components, CF(1) - the catalytic core - and CF(0) - the membrane proton channel. CF(1) has five subunits: alpha(3), beta(3), gamma(1), delta(1), epsilon(1). CF(0) has three main subunits: a(1), b(2) and c(9-12). The alpha and beta chains form an alternating ring which encloses part of the gamma chain. CF(1) is attached to CF(0) by a central stalk formed by the gamma and epsilon chains, while a peripheral stalk is formed by the delta and b chains.

Its subcellular location is the cell membrane. It catalyses the reaction ATP + H2O + 4 H(+)(in) = ADP + phosphate + 5 H(+)(out). In terms of biological role, produces ATP from ADP in the presence of a proton gradient across the membrane. The catalytic sites are hosted primarily by the beta subunits. This chain is ATP synthase subunit beta, found in Streptococcus pyogenes serotype M5 (strain Manfredo).